We begin with the raw amino-acid sequence, 340 residues long: METMLFSPYTIRGVTIKNRIVMSPMCMYSCDTEDGKVRNWHKIHYPTRAVGQVGLIIVEATAVAAQGRISSRDLGIWSDEHVDGLRELASLVKEHGAKIGIQLAHAGRKSEVDGEIIAPSAIPFSEKTRTPKEMTKADIEETIQAFQNGARRAKEAGFDIIEIHGAHGYLINEFLSPLSNRRQDEYGGSPENRYRFLGEIIDAVREVWDGPLFVRISASDYHPEGLTVKDYVPYAKRMKEQGVDLIDVSSGAVVPAKIRVYPGYQVPFAETIRREANIATGAVGLITSGLQAEEILRNGRADLVFLARELLRNPYWPYAAAKELGTTISASVQYERGWRF.

Residue 23 to 26 (SPMC) coordinates FMN. Position 28 (Tyr-28) interacts with substrate. Residues Ala-60 and Gln-102 each coordinate FMN. A substrate-binding site is contributed by 164–167 (HGAH). Residues Arg-215 and 307-308 (AR) contribute to the FMN site.

Belongs to the NADH:flavin oxidoreductase/NADH oxidase family. NamA subfamily. In terms of assembly, homotetramer. The cofactor is FMN.

It catalyses the reaction A + NADPH + H(+) = AH2 + NADP(+). In terms of biological role, catalyzes the reduction of the double bond of an array of alpha,beta-unsaturated aldehydes and ketones. It also reduces the nitro group of nitroester and nitroaromatic compounds. It could have a role in detoxification processes. This is NADPH dehydrogenase from Geobacillus sp. (strain WCH70).